A 100-amino-acid chain; its full sequence is Small ribosomal subunit protein uS14c (100 aa).

The interval 1–22 (MARKGLIQRENKRQKLEQKYHS) is disordered. Over residues 7 to 20 (IQRENKRQKLEQKY) the composition is skewed to basic and acidic residues.

The protein belongs to the universal ribosomal protein uS14 family. In terms of assembly, part of the 30S ribosomal subunit.

It is found in the plastid. The protein resides in the chloroplast. Functionally, binds 16S rRNA, required for the assembly of 30S particles. This chain is Small ribosomal subunit protein uS14c, found in Daucus carota (Wild carrot).